Reading from the N-terminus, the 204-residue chain is Peptide deformylase (204 aa).

Fe cation-binding residues include cysteine 131 and histidine 174. Glutamate 175 is a catalytic residue. Residue histidine 178 coordinates Fe cation.

It belongs to the polypeptide deformylase family. Fe(2+) is required as a cofactor.

The catalysed reaction is N-terminal N-formyl-L-methionyl-[peptide] + H2O = N-terminal L-methionyl-[peptide] + formate. Its function is as follows. Removes the formyl group from the N-terminal Met of newly synthesized proteins. Requires at least a dipeptide for an efficient rate of reaction. N-terminal L-methionine is a prerequisite for activity but the enzyme has broad specificity at other positions. This is Peptide deformylase from Streptococcus thermophilus (strain CNRZ 1066).